The primary structure comprises 1342 residues: DNA-directed RNA polymerase subunit beta (1342 aa).

It belongs to the RNA polymerase beta chain family. As to quaternary structure, the RNAP catalytic core consists of 2 alpha, 1 beta, 1 beta' and 1 omega subunit. When a sigma factor is associated with the core the holoenzyme is formed, which can initiate transcription.

The catalysed reaction is RNA(n) + a ribonucleoside 5'-triphosphate = RNA(n+1) + diphosphate. Functionally, DNA-dependent RNA polymerase catalyzes the transcription of DNA into RNA using the four ribonucleoside triphosphates as substrates. The polypeptide is DNA-directed RNA polymerase subunit beta (Erwinia tasmaniensis (strain DSM 17950 / CFBP 7177 / CIP 109463 / NCPPB 4357 / Et1/99)).